Here is a 101-residue protein sequence, read N- to C-terminus: CRISPR-associated endoribonuclease Cas2 (101 aa).

A Mg(2+)-binding site is contributed by Asp8.

Belongs to the CRISPR-associated endoribonuclease Cas2 protein family. As to quaternary structure, homodimer, forms a heterotetramer with a Cas1 homodimer. Mg(2+) is required as a cofactor.

CRISPR (clustered regularly interspaced short palindromic repeat), is an adaptive immune system that provides protection against mobile genetic elements (viruses, transposable elements and conjugative plasmids). CRISPR clusters contain sequences complementary to antecedent mobile elements and target invading nucleic acids. CRISPR clusters are transcribed and processed into CRISPR RNA (crRNA). Functions as a ssRNA-specific endoribonuclease. Involved in the integration of spacer DNA into the CRISPR cassette. The chain is CRISPR-associated endoribonuclease Cas2 from Treponema denticola (strain ATCC 35405 / DSM 14222 / CIP 103919 / JCM 8153 / KCTC 15104).